We begin with the raw amino-acid sequence, 1366 residues long: Collagen alpha-2(I) chain (1366 aa).

A signal peptide spans 1–22 (MLSFVDTRTLLLLAVTSCLATC). Pyrrolidone carboxylic acid is present on glutamine 23. A propeptide spans 23-79 (QSLQEATARKGPTGDRGPRGERGPPGPPGRDGDDGIPGPPGPPGPPGPPGLGGNFAA) (N-terminal propeptide). The interval 27-1131 (EATARKGPTG…PRSPPSLRPK (1105 aa)) is disordered. The segment covering 34-44 (PTGDRGPRGER) has biased composition (basic and acidic residues). Residues 59–71 (PGPPGPPGPPGPP) are compositionally biased toward pro residues. Lysine 84 carries the post-translational modification Allysine. Residues 84–94 (KGVGLGPGPMG) show a composition bias toward gly residues. Residues 95-132 (LMGPRGPPGASGAPGPQGFQGPAGEPGEPGQTGPAGAR) show a composition bias toward low complexity. The span at 141 to 155 (AGEDGHPGKPGRPGE) shows a compositional bias: basic and acidic residues. Position 177 is a 5-hydroxylysine; alternate (lysine 177). Lysine 177 carries O-linked (Gal...) hydroxylysine; alternate glycosylation. Composition is skewed to low complexity over residues 225 to 254 (VGAP…SAGP), 279 to 293 (AGPR…VSGP), 300 to 321 (PGAN…AGAP), 330 to 345 (PGPV…RGIV), 384 to 408 (NGEA…RGLP), 423 to 434 (RGATGPAGVRGP), 470 to 489 (LPGI…RGEP), and 513 to 531 (AGLA…NGAQ). Residues 538 to 547 (GVQGGKGEQG) show a composition bias toward gly residues. Residues 594–611 (PGESGAAGPSGPIGSRGP) show a composition bias toward low complexity. Positions 634–643 (GASGPGGLPG) are enriched in gly residues. Low complexity-rich tracts occupy residues 668–690 (NPGR…AGAT) and 717–737 (VGPA…QPGA). Residues 738–747 (KGERGTKGPK) show a composition bias toward basic and acidic residues. Over residues 756-765 (TGPIGSAGPS) the composition is skewed to low complexity. Residues 775-784 (GSRGDGGPPG) show a composition bias toward gly residues. Low complexity-rich tracts occupy residues 785-795 (ATGFPGAAGRT), 863-876 (PQGL…LGLP), 893-932 (EPGP…NPGN), 951-974 (PGNI…PTGK), and 981-1001 (PGPA…PSGP). Residues 1005–1016 (RGDKGEPGEKGP) show a composition bias toward basic and acidic residues. Over residues 1089–1103 (AGPPGPPGPPGPPGP) the composition is skewed to pro residues. A propeptide spans 1120-1366 (DQPRSPPSLR…RVDVGPVCFK (247 aa)) (C-terminal propeptide). Positions 1133 to 1366 (YEVDATLKSL…RVDVGPVCFK (234 aa)) constitute a Fibrillar collagen NC1 domain. 3 disulfide bridges follow: cysteine 1163-cysteine 1195, cysteine 1203-cysteine 1364, and cysteine 1272-cysteine 1317. Residues aspartate 1181, asparagine 1183, glutamine 1184, cysteine 1186, and aspartate 1189 each contribute to the Ca(2+) site.

The protein belongs to the fibrillar collagen family. Trimers of one alpha 2(I) and two alpha 1(I) chains. Interacts (via C-terminus) with TMEM131 (via PapD-L domain); the interaction is direct and is involved in assembly and TRAPPIII ER-to-Golgi transport complex-dependent secretion of collagen. Prolines at the third position of the tripeptide repeating unit (G-X-Y) are hydroxylated in some or all of the chains. Forms the fibrils of tendon, ligaments and bones. In bones the fibrils are mineralized with calcium hydroxyapatite.

It is found in the secreted. The protein resides in the extracellular space. Its subcellular location is the extracellular matrix. Functionally, type I collagen is a member of group I collagen (fibrillar forming collagen). In Canis lupus familiaris (Dog), this protein is Collagen alpha-2(I) chain (COL1A2).